The chain runs to 394 residues: Envelope glycoprotein D (394 aa).

Residues 1-25 form the signal peptide; sequence MGGAAARLGAVILFVVIVGLHGVRG. The interaction with TNFRSF14 stretch occupies residues 25–57; the sequence is GKYALADASLKMADPNRFRGKDLPVPDRLTDPP. Topologically, residues 26–339 are virion surface; sequence KYALADASLK…PYHPPATPNN (314 aa). H64 lines the Zn(2+) pocket. Intrachain disulfides connect C91-C214, C131-C227, and C143-C152. N119 and N146 each carry an N-linked (GlcNAc...) asparagine; by host glycan. D240 is a Zn(2+) binding site. The interval 261–305 is profusion; it reads LKIAGWHGPKAPYTSTLLPPELSETPNATQPELAPEDPEDSALLE. The disordered stretch occupies residues 275–301; sequence STLLPPELSETPNATQPELAPEDPEDS. N287 is a glycosylation site (N-linked (GlcNAc...) asparagine; by host). The chain crosses the membrane as a helical span at residues 340-364; sequence MGLIAGAVGGSLLAALVICGIVYWM. Residues 365–394 are Intravirion-facing; that stretch reads RRRTQKGPKRIRLPHIREDDQPSSHQPLFY. Residues 374 to 394 are disordered; it reads RIRLPHIREDDQPSSHQPLFY.

This sequence belongs to the herpesviridae glycoprotein D family. In terms of assembly, homodimer. Interacts with host receptor TNFRSF14. Interacts with host receptor NECTIN1. Interacts (via profusion domain) with gB; this interaction occurs in the absence of gH/gL. Interacts (via profusion domain) with gH/gL heterodimer; this interaction occurs in the absence of gB. Associates with the gB-gH/gL-gD complex. Interacts (via C-terminus) with UL11 tegument protein. Interacts with host RSAD2.

Its subcellular location is the virion membrane. The protein localises to the host Golgi apparatus. Functionally, envelope glycoprotein that binds to the host cell entry receptors NECTIN1, TNFRSF14/HVEM and 3-O-sulfated heparan sulfate, promoting the virus entry into host cells. May trigger fusion with host membrane, by recruiting the fusion machinery composed of gB and gH/gL. The protein is Envelope glycoprotein D (gD) of Homo sapiens (Human).